The following is a 103-amino-acid chain: Histone H4 (103 aa).

Over residues 1–14 (MTGRGKGGKGLGKG) the composition is skewed to gly residues. The disordered stretch occupies residues 1–20 (MTGRGKGGKGLGKGGAKRHR). N6-acetyl-N6-methyllysine; alternate occurs at positions 6 and 13. Residues 17–21 (KRHRK) mediate DNA binding.

The protein belongs to the histone H4 family. As to quaternary structure, the nucleosome is a histone octamer containing two molecules each of H2A, H2B, H3 and H4 assembled in one H3-H4 heterotetramer and two H2A-H2B heterodimers. The octamer wraps approximately 147 bp of DNA.

It is found in the nucleus. The protein localises to the chromosome. In terms of biological role, core component of nucleosome. Nucleosomes wrap and compact DNA into chromatin, limiting DNA accessibility to the cellular machineries which require DNA as a template. Histones thereby play a central role in transcription regulation, DNA repair, DNA replication and chromosomal stability. DNA accessibility is regulated via a complex set of post-translational modifications of histones, also called histone code, and nucleosome remodeling. The polypeptide is Histone H4 (His4) (Myrmica ruginodis (Red ant)).